Here is a 461-residue protein sequence, read N- to C-terminus: Cysteine--tRNA ligase (461 aa).

A Zn(2+)-binding site is contributed by Cys-28. The 'HIGH' region motif lies at 30–40 (ITIYDLCHIGH). Zn(2+) is bound by residues Cys-209, His-234, and Glu-238. Residues 266-270 (KMSKS) carry the 'KMSKS' region motif. An ATP-binding site is contributed by Lys-269.

It belongs to the class-I aminoacyl-tRNA synthetase family. Monomer. Requires Zn(2+) as cofactor.

The protein localises to the cytoplasm. The catalysed reaction is tRNA(Cys) + L-cysteine + ATP = L-cysteinyl-tRNA(Cys) + AMP + diphosphate. This is Cysteine--tRNA ligase from Yersinia pseudotuberculosis serotype O:3 (strain YPIII).